Reading from the N-terminus, the 102-residue chain is Large ribosomal subunit protein bL21 (102 aa).

Belongs to the bacterial ribosomal protein bL21 family. Part of the 50S ribosomal subunit. Contacts protein L20.

This protein binds to 23S rRNA in the presence of protein L20. The polypeptide is Large ribosomal subunit protein bL21 (Photorhabdus laumondii subsp. laumondii (strain DSM 15139 / CIP 105565 / TT01) (Photorhabdus luminescens subsp. laumondii)).